The primary structure comprises 285 residues: Golgi phosphoprotein 3-like (285 aa).

Residues 1 to 42 (MTTLTHRARRTEISKNSEKKMESEEDSNWEKSPDNEDSGDSK) form a disordered region. Positions 10–42 (RTEISKNSEKKMESEEDSNWEKSPDNEDSGDSK) are enriched in basic and acidic residues. Residues Trp67 and Arg76 each coordinate a 1,2-diacyl-sn-glycero-3-phospho-(1D-myo-inositol 4-phosphate). Residue Ser112 is modified to Phosphoserine. Residues Arg157 and Arg160 each coordinate a 1,2-diacyl-sn-glycero-3-phospho-(1D-myo-inositol 4-phosphate). The interval 176 to 187 (EKQNFLLFDMTT) is beta-hairpin required for oligomerization.

This sequence belongs to the GOLPH3/VPS74 family. Homooligomer. Does not interact MYO18; differs from GOLPH3 by its inability to interact with MYO18. May interact with ARF1.

It localises to the golgi apparatus. Its subcellular location is the golgi stack membrane. The protein localises to the trans-Golgi network membrane. Its function is as follows. Phosphatidylinositol-4-phosphate-binding protein that may antagonize the action of GOLPH3 which is required for the process of vesicle budding at the Golgi and anterograde transport to the plasma membrane. The polypeptide is Golgi phosphoprotein 3-like (GOLPH3L) (Homo sapiens (Human)).